We begin with the raw amino-acid sequence, 187 residues long: Aminodeoxychorismate synthase component 2 (187 aa).

The region spanning 1–187 is the Glutamine amidotransferase type-1 domain; the sequence is MILLIDNYDS…HQLLANFLHR (187 aa). Active-site residues include cysteine 79, histidine 168, and glutamate 170.

In terms of assembly, monomer. Heterodimer consisting of two non-identical subunits: a glutamine amidotransferase subunit (PabA) and a aminodeoxychorismate synthase subunit (PabB).

It carries out the reaction chorismate + L-glutamine = 4-amino-4-deoxychorismate + L-glutamate. The protein operates within cofactor biosynthesis; tetrahydrofolate biosynthesis; 4-aminobenzoate from chorismate: step 1/2. Inhibited by 6-diazo-5-oxo-L-norleucine (DON). The inhibition is competitive with glutamine, but uncompetitive with chorismate. Part of a heterodimeric complex that catalyzes the two-step biosynthesis of 4-amino-4-deoxychorismate (ADC), a precursor of p-aminobenzoate (PABA) and tetrahydrofolate. In the first step, a glutamine amidotransferase (PabA) generates ammonia as a substrate that, along with chorismate, is used in the second step, catalyzed by aminodeoxychorismate synthase (PabB) to produce ADC. PabA converts glutamine into glutamate only in the presence of stoichiometric amounts of PabB. The chain is Aminodeoxychorismate synthase component 2 from Escherichia coli (strain K12).